The chain runs to 226 residues: Uracil-DNA glycosylase (226 aa).

Aspartate 64 acts as the Proton acceptor in catalysis.

This sequence belongs to the uracil-DNA glycosylase (UDG) superfamily. UNG family.

Its subcellular location is the cytoplasm. The enzyme catalyses Hydrolyzes single-stranded DNA or mismatched double-stranded DNA and polynucleotides, releasing free uracil.. Excises uracil residues from the DNA which can arise as a result of misincorporation of dUMP residues by DNA polymerase or due to deamination of cytosine. In Proteus mirabilis (strain HI4320), this protein is Uracil-DNA glycosylase.